The following is a 558-amino-acid chain: ATP synthase subunit alpha (558 aa).

Residue 172–179 (GDRKTGKT) coordinates ATP. The segment at 536–558 (ESVKVHQAIPAKTSEKSKNSTPR) is disordered. The span at 548–558 (TSEKSKNSTPR) shows a compositional bias: basic and acidic residues.

The protein belongs to the ATPase alpha/beta chains family. In terms of assembly, F-type ATPases have 2 components, CF(1) - the catalytic core - and CF(0) - the membrane proton channel. CF(1) has five subunits: alpha(3), beta(3), gamma(1), delta(1), epsilon(1). CF(0) has three main subunits: a(1), b(2) and c(9-12). The alpha and beta chains form an alternating ring which encloses part of the gamma chain. CF(1) is attached to CF(0) by a central stalk formed by the gamma and epsilon chains, while a peripheral stalk is formed by the delta and b chains.

Its subcellular location is the cell membrane. It catalyses the reaction ATP + H2O + 4 H(+)(in) = ADP + phosphate + 5 H(+)(out). In terms of biological role, produces ATP from ADP in the presence of a proton gradient across the membrane. The alpha chain is a regulatory subunit. This is ATP synthase subunit alpha from Mycobacterium leprae (strain Br4923).